Consider the following 957-residue polypeptide: Glycine dehydrogenase (decarboxylating) 2 (957 aa).

Lys707 bears the N6-(pyridoxal phosphate)lysine mark.

The protein belongs to the GcvP family. As to quaternary structure, the glycine cleavage system is composed of four proteins: P, T, L and H. It depends on pyridoxal 5'-phosphate as a cofactor.

The catalysed reaction is N(6)-[(R)-lipoyl]-L-lysyl-[glycine-cleavage complex H protein] + glycine + H(+) = N(6)-[(R)-S(8)-aminomethyldihydrolipoyl]-L-lysyl-[glycine-cleavage complex H protein] + CO2. The glycine cleavage system catalyzes the degradation of glycine. The P protein binds the alpha-amino group of glycine through its pyridoxal phosphate cofactor; CO(2) is released and the remaining methylamine moiety is then transferred to the lipoamide cofactor of the H protein. The sequence is that of Glycine dehydrogenase (decarboxylating) 2 from Pseudomonas fluorescens (strain Pf0-1).